Consider the following 500-residue polypeptide: Serine carboxypeptidase 3 (500 aa).

The N-terminal stretch at 1 to 21 (MATARVSLILLVVVLAASACA) is a signal peptide. Residues 22-73 (EGLRLPRDAKFPAAQAERLIRSLNLLPKEAGPTGAGDVPSVAPGELLERRVT) constitute a propeptide that is removed on maturation. 3 disulfides stabilise this stretch: cysteine 126–cysteine 366, cysteine 294–cysteine 309, and cysteine 332–cysteine 337. An N-linked (GlcNAc...) asparagine glycan is attached at asparagine 144. Serine 216 is an active-site residue. The active site involves aspartate 404. Cysteine 407 provides a ligand contact to substrate. Histidine 461 is a catalytic residue. A propeptide spanning residues 485–500 (EEWLAELPEQPMYAAM) is cleaved from the precursor.

Belongs to the peptidase S10 family. Monomer.

It catalyses the reaction Release of a C-terminal amino acid with broad specificity.. This chain is Serine carboxypeptidase 3 (CBP3), found in Oryza sativa subsp. japonica (Rice).